Here is a 941-residue protein sequence, read N- to C-terminus: Glycine dehydrogenase (decarboxylating) (941 aa).

Residue lysine 692 is modified to N6-(pyridoxal phosphate)lysine.

The protein belongs to the GcvP family. As to quaternary structure, the glycine cleavage system is composed of four proteins: P, T, L and H. Pyridoxal 5'-phosphate serves as cofactor.

It carries out the reaction N(6)-[(R)-lipoyl]-L-lysyl-[glycine-cleavage complex H protein] + glycine + H(+) = N(6)-[(R)-S(8)-aminomethyldihydrolipoyl]-L-lysyl-[glycine-cleavage complex H protein] + CO2. In terms of biological role, the glycine cleavage system catalyzes the degradation of glycine. The P protein binds the alpha-amino group of glycine through its pyridoxal phosphate cofactor; CO(2) is released and the remaining methylamine moiety is then transferred to the lipoamide cofactor of the H protein. The chain is Glycine dehydrogenase (decarboxylating) from Mycobacterium bovis (strain ATCC BAA-935 / AF2122/97).